The sequence spans 219 residues: Large ribosomal subunit protein uL3 (219 aa).

The tract at residues 140–163 (SASHGAHRNHRKPGSIGASSTPSR) is disordered.

The protein belongs to the universal ribosomal protein uL3 family. Part of the 50S ribosomal subunit. Forms a cluster with proteins L14 and L19.

Its function is as follows. One of the primary rRNA binding proteins, it binds directly near the 3'-end of the 23S rRNA, where it nucleates assembly of the 50S subunit. The chain is Large ribosomal subunit protein uL3 from Leifsonia xyli subsp. xyli (strain CTCB07).